The following is a 310-amino-acid chain: Phosphoribosylaminoimidazole-succinocarboxamide synthase (310 aa).

It belongs to the SAICAR synthetase family.

It carries out the reaction 5-amino-1-(5-phospho-D-ribosyl)imidazole-4-carboxylate + L-aspartate + ATP = (2S)-2-[5-amino-1-(5-phospho-beta-D-ribosyl)imidazole-4-carboxamido]succinate + ADP + phosphate + 2 H(+). Its pathway is purine metabolism; IMP biosynthesis via de novo pathway; 5-amino-1-(5-phospho-D-ribosyl)imidazole-4-carboxamide from 5-amino-1-(5-phospho-D-ribosyl)imidazole-4-carboxylate: step 1/2. The protein is Phosphoribosylaminoimidazole-succinocarboxamide synthase of Stenotrophomonas maltophilia (strain K279a).